Reading from the N-terminus, the 100-residue chain is Protein RnfH (100 aa).

This sequence belongs to the UPF0125 (RnfH) family.

This is Protein RnfH from Pseudomonas paraeruginosa (strain DSM 24068 / PA7) (Pseudomonas aeruginosa (strain PA7)).